Reading from the N-terminus, the 256-residue chain is DNA repair protein RecO (256 aa).

This sequence belongs to the RecO family.

Involved in DNA repair and RecF pathway recombination. The chain is DNA repair protein RecO from Rhizobium etli (strain ATCC 51251 / DSM 11541 / JCM 21823 / NBRC 15573 / CFN 42).